The chain runs to 599 residues: Probable acetolactate synthase large subunit (599 aa).

Thiamine diphosphate is bound at residue glutamate 47. FAD contacts are provided by residues arginine 149, 258–279 (HGTK…IGCR), and 301–320 (DIDP…IVGD). The thiamine pyrophosphate binding stretch occupies residues 404-484 (QNQMWMAHYF…VVICIFDNRT (81 aa)). Mg(2+) contacts are provided by aspartate 455 and asparagine 482.

It belongs to the TPP enzyme family. As to quaternary structure, dimer of large and small chains. Requires Mg(2+) as cofactor. Thiamine diphosphate serves as cofactor.

It catalyses the reaction 2 pyruvate + H(+) = (2S)-2-acetolactate + CO2. It functions in the pathway amino-acid biosynthesis; L-isoleucine biosynthesis; L-isoleucine from 2-oxobutanoate: step 1/4. It participates in amino-acid biosynthesis; L-valine biosynthesis; L-valine from pyruvate: step 1/4. This chain is Probable acetolactate synthase large subunit (ilvB), found in Methanococcus aeolicus.